Reading from the N-terminus, the 513-residue chain is NADH-quinone oxidoreductase subunit N (513 aa).

The next 14 helical transmembrane spans lie at 20–40 (SVGFFIPEIYLSLLFMILIVV), 49–69 (STLLSVFSLVGLAGSLYFIYQ), 88–108 (FAIFFKYFFVLSGMLAVVITM), 117–137 (ISSMGEYYALVVAMVVGMMMM), 144–164 (LMIFLSMELVSFTAFILAGYF), 178–198 (LIYGAVSSGLMIYGFSLIYGV), 219–239 (FVMLFAALLVLAGFGYKIGAV), 260–280 (LSVASKAAGFALLMRFVYVAL), 295–315 (WFTLLVILAVASMIYGNVVAL), 323–343 (LLAYSSIAHAGYALLGVIVMD), 351–371 (LFYLLSYLLMNFGAFFVVVLI), 394–414 (GAALTVFLISLVGLPPTIGFI), 429–451 (IFMWLALIGILTSVISLYYYMLI), and 474–494 (LVAQLFMGALMLLTIYFGLFF).

The protein belongs to the complex I subunit 2 family. In terms of assembly, NDH-1 is composed of 14 different subunits. Subunits NuoA, H, J, K, L, M, N constitute the membrane sector of the complex.

It localises to the cell inner membrane. It catalyses the reaction a quinone + NADH + 5 H(+)(in) = a quinol + NAD(+) + 4 H(+)(out). Functionally, NDH-1 shuttles electrons from NADH, via FMN and iron-sulfur (Fe-S) centers, to quinones in the respiratory chain. The immediate electron acceptor for the enzyme in this species is believed to be a menaquinone. Couples the redox reaction to proton translocation (for every two electrons transferred, four hydrogen ions are translocated across the cytoplasmic membrane), and thus conserves the redox energy in a proton gradient. This is NADH-quinone oxidoreductase subunit N from Chlorobium chlorochromatii (strain CaD3).